Reading from the N-terminus, the 550-residue chain is Chaperonin GroEL (550 aa).

Residues 30 to 33 (TLGP), Lys51, 87 to 91 (DGTTT), Gly415, 479 to 481 (NAA), and Asp495 contribute to the ATP site.

It belongs to the chaperonin (HSP60) family. In terms of assembly, forms a cylinder of 14 subunits composed of two heptameric rings stacked back-to-back. Interacts with the co-chaperonin GroES.

Its subcellular location is the cytoplasm. The enzyme catalyses ATP + H2O + a folded polypeptide = ADP + phosphate + an unfolded polypeptide.. In terms of biological role, together with its co-chaperonin GroES, plays an essential role in assisting protein folding. The GroEL-GroES system forms a nano-cage that allows encapsulation of the non-native substrate proteins and provides a physical environment optimized to promote and accelerate protein folding. This chain is Chaperonin GroEL, found in Burkholderia mallei (strain NCTC 10247).